Reading from the N-terminus, the 422-residue chain is Isocitrate dehydrogenase [NADP] (422 aa).

T94 is a binding site for NADP(+). Residues S103, N105, R109, R119, and R143 each contribute to the D-threo-isocitrate site. Residue D310 coordinates Mg(2+). Residues 344 to 350 (HGTAPKY), N357, Y396, and R400 each bind NADP(+).

Belongs to the isocitrate and isopropylmalate dehydrogenases family. As to quaternary structure, homodimer. The cofactor is Mg(2+). Mn(2+) serves as cofactor.

The enzyme catalyses D-threo-isocitrate + NADP(+) = 2-oxoglutarate + CO2 + NADPH. Its function is as follows. Catalyzes the oxidative decarboxylation of isocitrate to 2-oxoglutarate and carbon dioxide with the concomitant reduction of NADP(+). This is Isocitrate dehydrogenase [NADP] (icd) from Staphylococcus epidermidis (strain ATCC 35984 / DSM 28319 / BCRC 17069 / CCUG 31568 / BM 3577 / RP62A).